The sequence spans 464 residues: NADH dehydrogenase [ubiquinone] flavoprotein 1, mitochondrial (464 aa).

The transit peptide at 1-20 directs the protein to the mitochondrion; it reads MLATRRLLGWSLPARVSVRF. Position 81 is an N6-acetyllysine; alternate (Lys81). N6-succinyllysine; alternate is present on Lys81. An NADH-binding site is contributed by 87-96; that stretch reads GRGGAGFPTG. An N6-acetyllysine modification is found at Lys104. 199 to 247 lines the FMN pocket; sequence RGAGAYICGEETALIESIEGKQGKPRLKPPFPADVGVFGCPTTVANVET. Arg257 carries the post-translational modification Omega-N-methylarginine. Lys375 bears the N6-acetyllysine mark. Residues Cys379, Cys382, Cys385, and Cys425 each contribute to the [4Fe-4S] cluster site.

The protein belongs to the complex I 51 kDa subunit family. Core subunit of respiratory chain NADH dehydrogenase (Complex I) which is composed of 45 different subunits. This is a component of the flavoprotein-sulfur (FP) fragment of the enzyme. Interacts with RAB5IF. Requires FMN as cofactor. [4Fe-4S] cluster serves as cofactor.

The protein localises to the mitochondrion inner membrane. It catalyses the reaction a ubiquinone + NADH + 5 H(+)(in) = a ubiquinol + NAD(+) + 4 H(+)(out). Functionally, core subunit of the mitochondrial membrane respiratory chain NADH dehydrogenase (Complex I) which catalyzes electron transfer from NADH through the respiratory chain, using ubiquinone as an electron acceptor. Part of the peripheral arm of the enzyme, where the electrons from NADH are accepted by flavin mononucleotide (FMN) and then passed along a chain of iron-sulfur clusters by electron tunnelling to the final acceptor ubiquinone. Contains FMN, which is the initial electron acceptor as well as one iron-sulfur cluster. This is NADH dehydrogenase [ubiquinone] flavoprotein 1, mitochondrial from Pan troglodytes (Chimpanzee).